The sequence spans 714 residues: MFNTHKVEIEWGGRPLTIETGKIARQADGAVLATYGETAVLATVVSAKEPKPGQDFFPLTVNYQEKTYAAGKIPGGYFKREGRPSENETLVSRLIDRPIRPLFVDGYKNDTQVVITVLQHDLENNPDILSMVAASAALTISGVPFMGPISGARVGYIDGEYVLNPNIDEMPESKLDLVVAGTSEAVLMVESEAQELPEDVMLGAVMFGHKSFQPVIDAIIKLAEVAAKEPRDFQPEDLSELEAKVLAVVENDLREAYKITEKQARYAAVDAAKAKAKEHFFPEGVEETEMLAEQFATIFTHLQAKIVRWNILDTGNRIDGRDLSTVRPIVSEVGILPRTHGSALFTRGETQAIVVATLGTGEDEQMIDALTGTYKESFMLHYNFPPYSVGETGRMGSPGRREIGHGKLAWRAIHPMLPAAEQFPYTIRAVSEITESNGSSSMATVCGTSLALMDAGVPIVRPVAGIAMGLIKEGERFAVLSDILGDEDHLGDMDFKVAGTEFGITSLQMDIKIDGITEEIMKVALEQAKGGRVHILGEMAKAISSSRAELGEFAPRIEVMNIPTDKIRDVIGSGGKVIREIVEKTGAKINIEDDGTVKIASSNGKEIEAAKKWIHSIVAEPEVGEIYEGTVVKTADFGAFVNFFGPRDGLVHISQLAADRVAKTTDVVKEGQKVWVKLMGFDERGKVRLSMKVVDQETGKEIVAEKKKEEVDAE.

Mg(2+) contacts are provided by Asp488 and Asp494. Residues 555 to 614 (PRIEVMNIPTDKIRDVIGSGGKVIREIVEKTGAKINIEDDGTVKIASSNGKEIEAAKKWI) form the KH domain. The S1 motif domain occupies 624 to 692 (GEIYEGTVVK…ERGKVRLSMK (69 aa)).

The protein belongs to the polyribonucleotide nucleotidyltransferase family. Mg(2+) is required as a cofactor.

The protein resides in the cytoplasm. It catalyses the reaction RNA(n+1) + phosphate = RNA(n) + a ribonucleoside 5'-diphosphate. In terms of biological role, involved in mRNA degradation. Catalyzes the phosphorolysis of single-stranded polyribonucleotides processively in the 3'- to 5'-direction. The polypeptide is Polyribonucleotide nucleotidyltransferase (Brucella ovis (strain ATCC 25840 / 63/290 / NCTC 10512)).